Here is a 318-residue protein sequence, read N- to C-terminus: Ornithine carbamoyltransferase (318 aa).

Carbamoyl phosphate is bound by residues 63 to 66 (STRT), Q90, R114, and 141 to 144 (HPCQ). L-ornithine-binding positions include N172, D235, and 239–240 (SM). Carbamoyl phosphate is bound by residues 275–276 (CL) and R303.

Belongs to the aspartate/ornithine carbamoyltransferase superfamily. OTCase family.

The protein localises to the cytoplasm. The enzyme catalyses carbamoyl phosphate + L-ornithine = L-citrulline + phosphate + H(+). The protein operates within amino-acid biosynthesis; L-arginine biosynthesis; L-arginine from L-ornithine and carbamoyl phosphate: step 1/3. Its function is as follows. Reversibly catalyzes the transfer of the carbamoyl group from carbamoyl phosphate (CP) to the N(epsilon) atom of ornithine (ORN) to produce L-citrulline. This Prochlorococcus marinus (strain MIT 9313) protein is Ornithine carbamoyltransferase.